The following is a 193-amino-acid chain: Fibrillarin-like rRNA/tRNA 2'-O-methyltransferase (193 aa).

S-adenosyl-L-methionine is bound by residues T82–T83, E100–F101, D125–A126, and D145–Q148.

This sequence belongs to the methyltransferase superfamily. Fibrillarin family. Interacts with nop5. Component of box C/D small ribonucleoprotein (sRNP) particles that contain rpl7ae, FlpA and nop5, plus a guide RNA.

In terms of biological role, involved in pre-rRNA and tRNA processing. Utilizes the methyl donor S-adenosyl-L-methionine to catalyze the site-specific 2'-hydroxyl methylation of ribose moieties in rRNA and tRNA. Site specificity is provided by a guide RNA that base pairs with the substrate. Methylation occurs at a characteristic distance from the sequence involved in base pairing with the guide RNA. This chain is Fibrillarin-like rRNA/tRNA 2'-O-methyltransferase, found in Methanosarcina mazei (Methanosarcina frisia).